A 123-amino-acid polypeptide reads, in one-letter code: Large ribosomal subunit protein uL14c (123 aa).

The protein belongs to the universal ribosomal protein uL14 family. In terms of assembly, part of the 50S ribosomal subunit.

The protein localises to the plastid. Its subcellular location is the chloroplast. Functionally, binds to 23S rRNA. This is Large ribosomal subunit protein uL14c from Brachypodium distachyon (Purple false brome).